The following is a 728-amino-acid chain: 1,4-alpha-glucan branching enzyme GlgB (728 aa).

Aspartate 405 serves as the catalytic Nucleophile. Catalysis depends on glutamate 458, which acts as the Proton donor.

It belongs to the glycosyl hydrolase 13 family. GlgB subfamily. In terms of assembly, monomer.

The enzyme catalyses Transfers a segment of a (1-&gt;4)-alpha-D-glucan chain to a primary hydroxy group in a similar glucan chain.. It participates in glycan biosynthesis; glycogen biosynthesis. Its function is as follows. Catalyzes the formation of the alpha-1,6-glucosidic linkages in glycogen by scission of a 1,4-alpha-linked oligosaccharide from growing alpha-1,4-glucan chains and the subsequent attachment of the oligosaccharide to the alpha-1,6 position. The sequence is that of 1,4-alpha-glucan branching enzyme GlgB from Escherichia coli O1:K1 / APEC.